The primary structure comprises 539 residues: Oviduct-specific glycoprotein (539 aa).

The N-terminal stretch at methionine 1–alanine 21 is a signal peptide. A GH18 domain is found at histidine 22–aspartate 385. The cysteines at positions 26 and 51 are disulfide-linked. Chitin contacts are provided by residues proline 71–leucine 72, glycine 98–asparagine 101, tyrosine 142, leucine 211–aspartate 214, and tryptophan 355. The N-linked (GlcNAc...) asparagine glycan is linked to asparagine 402. Disordered regions lie at residues threonine 433 to threonine 480 and glutamine 503 to leucine 539. The span at alanine 440–proline 457 shows a compositional bias: low complexity.

The protein belongs to the glycosyl hydrolase 18 family. Oviduct.

The protein resides in the cytoplasmic vesicle. It localises to the secretory vesicle. In terms of biological role, binds to oocyte zona pellucida in vivo. May play a role in the fertilization process and/or early embryonic development. The sequence is that of Oviduct-specific glycoprotein (OVGP1) from Ovis aries (Sheep).